We begin with the raw amino-acid sequence, 262 residues long: Dihydroorotate dehydrogenase B (NAD(+)), electron transfer subunit (262 aa).

The FAD-binding FR-type domain occupies 3–104 (QLQEMMTVVS…MGPLGNGFPV (102 aa)). Residues 53–56 (RPIS), 70–72 (LYR), and 79–80 (GT) each bind FAD. [2Fe-2S] cluster contacts are provided by cysteine 226, cysteine 231, cysteine 234, and cysteine 249.

This sequence belongs to the PyrK family. In terms of assembly, heterotetramer of 2 PyrK and 2 PyrD type B subunits. [2Fe-2S] cluster is required as a cofactor. It depends on FAD as a cofactor.

Its pathway is pyrimidine metabolism; UMP biosynthesis via de novo pathway; orotate from (S)-dihydroorotate (NAD(+) route): step 1/1. Responsible for channeling the electrons from the oxidation of dihydroorotate from the FMN redox center in the PyrD type B subunit to the ultimate electron acceptor NAD(+). This Lactococcus lactis subsp. cremoris (strain SK11) protein is Dihydroorotate dehydrogenase B (NAD(+)), electron transfer subunit.